The chain runs to 145 residues: Bacilliredoxin Acid345_1880 (145 aa).

Belongs to the bacilliredoxin family.

The polypeptide is Bacilliredoxin Acid345_1880 (Koribacter versatilis (strain Ellin345)).